Reading from the N-terminus, the 215-residue chain is Protein NETWORKED 3B (215 aa).

One can recognise an NAB domain in the interval 5–90 (SKWWWIGANH…QKHDLLIKTS (86 aa)). Residues 134–165 (DETMKEELEILREENRVYKEKKEVVTRLLANL) are a coiled coil.

Belongs to the NET family. In terms of assembly, interacts with F-actin.

Its function is as follows. Plant-specific actin binding protein. May be part of a membrane-cytoskeletal adapter complex. This chain is Protein NETWORKED 3B, found in Arabidopsis thaliana (Mouse-ear cress).